The sequence spans 80 residues: Exodeoxyribonuclease 7 small subunit (80 aa).

The protein belongs to the XseB family. Heterooligomer composed of large and small subunits.

It localises to the cytoplasm. It catalyses the reaction Exonucleolytic cleavage in either 5'- to 3'- or 3'- to 5'-direction to yield nucleoside 5'-phosphates.. Its function is as follows. Bidirectionally degrades single-stranded DNA into large acid-insoluble oligonucleotides, which are then degraded further into small acid-soluble oligonucleotides. The chain is Exodeoxyribonuclease 7 small subunit from Enterobacter sp. (strain 638).